Reading from the N-terminus, the 55-residue chain is Large ribosomal subunit protein bL32 (55 aa).

The interval 1–28 (MAVQQNKPTRSKRGMRRSHDALTTATLS) is disordered.

The protein belongs to the bacterial ribosomal protein bL32 family.

The sequence is that of Large ribosomal subunit protein bL32 from Serratia proteamaculans (strain 568).